The primary structure comprises 866 residues: Dynamin-2 (866 aa).

The Dynamin-type G domain maps to His-28–Pro-294. The segment at Gly-38 to Ser-45 is G1 motif. Positions 41, 43, 44, 45, 46, 59, and 60 each coordinate GDP. The interval Val-64–Arg-66 is G2 motif. The tract at residues Asp-136–Gly-139 is G3 motif. The tract at residues Thr-205–Asp-208 is G4 motif. Residues Lys-206, Asp-208, and Asp-211 each contribute to the GDP site. At Tyr-231 the chain carries Phosphotyrosine. The G5 motif stretch occupies residues Val-235–Ser-238. 3 residues coordinate GDP: Asn-236, Arg-237, and Gln-239. Lys-299 is subject to N6-acetyllysine. The PH domain maps to Gln-515 to Val-621. Tyr-593 is subject to Phosphotyrosine. The residue at position 594 (Lys-594) is an N6-acetyllysine. Residues Val-649 to Val-740 enclose the GED domain. The disordered stretch occupies residues Thr-737–Asp-866. Thr-751 is modified (phosphothreonine). Over residues Trp-752 to Pro-763 the composition is skewed to polar residues. Position 760 is a phosphoserine; by CDK1 (Ser-760). Pro residues-rich tracts occupy residues Thr-784 to Val-794, Pro-802 to His-811, and Ser-822 to Pro-851.

It belongs to the TRAFAC class dynamin-like GTPase superfamily. Dynamin/Fzo/YdjA family. As to quaternary structure, oligomerizes into a helical polymer that self-assembles around the vesicle membrane, when associated to the menbrane through lipid binding. Interacts with SHANK1 and SHANK2. Interacts with SNX9. Interacts (via C-terminal proline-rich domain (PRD)) with SNX18 (via SH3 domain); this interaction regulates ATG9A and ATG16L1 trafficking from recycling endosomes to sites of autophagosome formation. Interacts with SNX33 (via SH3 domain). Interacts with MYO1E (via SH3 domain). Interacts with PSTPIP1 (via SH3 domain). Interacts with CTNND2. Interacts (via C-terminal proline-rich domain (PRD)) with BIN1 (via SH3 domain); this interaction allows the recruitment of DNM2 to the membrane tubules and inhibits self-assembly-stimulated GTPase activity on the membrane. Interacts with GABARAP, GABARAPL1 and GABARAPL2. Interacts with MAP1LC3B (the lipidate and non-lipidated LC3 form); this interaction mediates recycling endosome scission leading to autophagosome release. Interacts with ITSN1. Interacts with MYOF. Interacts (via C-terminal proline-rich domain (PRD)) with SH3BP4 (via SH3 domain); this interaction controls the GTPase activity and is prevented by EGFR-induced tyrosine phosphorylation of either DNM2 or SH3BP4. May interact with PIK3C3. May be a component of a complex composed of RAB5A (in GDP-bound form), DYN2 and PIK3C3. Interacts with SDC4; this interaction is markedly enhanced at focal ahesion site upon induction of focal adhesions and stress-fiber formation. Interacts with ACTN1. Interacts with CTTN; this interaction stimulates the intrinsic GTPase activity of DNM2 and stabilizes the association of DNM2 and actin filaments; in addition this interaction is stimulated by ligand binding to the receptor, leading to the recruitment of the DNM2-CTTN complex to the sequestered receptor-ligand complex to its internalization. Interacts with NOSTRIN (via SH3 domain); this interaction allows the recruitment of NOS3 to dynamin-positive structures. Interacts with TUBG1; this interaction may participate in centrosome cohesion. In terms of processing, phosphorylation at Ser-844 by GSK3-alpha relieves the inhibition of BIN1 and promotes endocytosis. Phosphorylation at Ser-760 by CDK1 is greatly increased upon mitotic entry. It regulates cytokinesis downstream of calcineurin, and does not affect clathrin-mediated endocytosis. Dephosphorylated by calcineurin/PP2 during cytokinesis in a Ca(2+)- and calmodulin-dependent manner. Phosphorylated on tyrosine residues by EGFR and after activation of SRC.

The protein localises to the cytoplasm. It localises to the cytoskeleton. The protein resides in the cytoplasmic vesicle. It is found in the clathrin-coated vesicle. Its subcellular location is the cell projection. The protein localises to the uropodium. It localises to the endosome. The protein resides in the microtubule organizing center. It is found in the centrosome. Its subcellular location is the centriole. The protein localises to the recycling endosome. It localises to the phagocytic cup. The protein resides in the phagosome membrane. It is found in the podosome. Its subcellular location is the cell junction. The protein localises to the postsynaptic density. It localises to the synapse. The protein resides in the synaptosome. It is found in the midbody. Its subcellular location is the membrane. The protein localises to the clathrin-coated pit. The catalysed reaction is GTP + H2O = GDP + phosphate + H(+). Functionally, catalyzes the hydrolysis of GTP and utilizes this energy to mediate vesicle scission at plasma membrane during endocytosis and filament remodeling at many actin structures during organization of the actin cytoskeleton. Plays an important role in vesicular trafficking processes, namely clathrin-mediated endocytosis (CME), exocytic and clathrin-coated vesicle from the trans-Golgi network, and PDGF stimulated macropinocytosis. During vesicular trafficking process, associates to the membrane, through lipid binding, and self-assembles into ring-like structure through oligomerization to form a helical polymer around the vesicle membrane and leading to vesicle scission. Plays a role in organization of the actin cytoskeleton by mediating arrangement of stress fibers and actin bundles in podocytes. During organization of the actin cytoskeleton, self-assembles into ring-like structure that directly bundles actin filaments to form typical membrane tubules decorated with dynamin spiral polymers. Self-assembly increases GTPase activity and the GTP hydrolysis causes the rapid depolymerization of dynamin spiral polymers, and results in dispersion of actin bundles. Remodels, through its interaction with CTTN, bundled actin filaments in a GTPase-dependent manner and plays a role in orchestrating the global actomyosin cytoskeleton. The interaction with CTTN stabilizes the interaction of DNM2 and actin filaments and stimulates the intrinsic GTPase activity that results in actin filament-barbed ends and increases the sensitivity of filaments in bundles to the actin depolymerizing factor, CFL1. Plays a role in the autophagy process, by participating in the formation of ATG9A vesicles destined for the autophagosomes through its interaction with SNX18, by mediating recycling endosome scission leading to autophagosome release through MAP1LC3B interaction. Also regulates maturation of apoptotic cell corpse-containing phagosomes by recruiting PIK3C3 to the phagosome membrane. Also plays a role in cytokinesis. May participate in centrosome cohesion through its interaction with TUBG1. Plays a role in the regulation of neuron morphology, axon growth and formation of neuronal growth cones. Involved in membrane tubulation. The protein is Dynamin-2 of Bos taurus (Bovine).